The following is a 270-amino-acid chain: 4-hydroxy-tetrahydrodipicolinate reductase (270 aa).

Residues 9 to 14 (GAGGRM) and glutamate 35 contribute to the NAD(+) site. Arginine 36 provides a ligand contact to NADP(+). Residues 99 to 101 (GTT) and 123 to 126 (ASNY) contribute to the NAD(+) site. Histidine 156 acts as the Proton donor/acceptor in catalysis. Histidine 157 contributes to the (S)-2,3,4,5-tetrahydrodipicolinate binding site. Residue lysine 160 is the Proton donor of the active site. Residue 166–167 (GT) coordinates (S)-2,3,4,5-tetrahydrodipicolinate.

The protein belongs to the DapB family.

It is found in the cytoplasm. It carries out the reaction (S)-2,3,4,5-tetrahydrodipicolinate + NAD(+) + H2O = (2S,4S)-4-hydroxy-2,3,4,5-tetrahydrodipicolinate + NADH + H(+). It catalyses the reaction (S)-2,3,4,5-tetrahydrodipicolinate + NADP(+) + H2O = (2S,4S)-4-hydroxy-2,3,4,5-tetrahydrodipicolinate + NADPH + H(+). It functions in the pathway amino-acid biosynthesis; L-lysine biosynthesis via DAP pathway; (S)-tetrahydrodipicolinate from L-aspartate: step 4/4. Its function is as follows. Catalyzes the conversion of 4-hydroxy-tetrahydrodipicolinate (HTPA) to tetrahydrodipicolinate. This Histophilus somni (strain 129Pt) (Haemophilus somnus) protein is 4-hydroxy-tetrahydrodipicolinate reductase.